A 490-amino-acid polypeptide reads, in one-letter code: Cytochrome P450 2W1 (490 aa).

The signal sequence occupies residues 1-22 (MALLLLLFLGLLGLWGLLCACA). A glycan (N-linked (GlcNAc...) asparagine) is linked at Asn177. Cys433 provides a ligand contact to heme.

Belongs to the cytochrome P450 family. Requires heme as cofactor. As to expression, very low levels are detected in fetal and adult tissues. Highly expressed in several tumor samples, in particular colon and adrenal tumors.

It is found in the endoplasmic reticulum lumen. The protein localises to the cell membrane. Its subcellular location is the microsome membrane. It catalyses the reaction all-trans-retinoate + reduced [NADPH--hemoprotein reductase] + O2 = all-trans-4-hydroxyretinoate + oxidized [NADPH--hemoprotein reductase] + H2O + H(+). It carries out the reaction 1-(9Z-octadecenoyl)-sn-glycero-3-phosphocholine + reduced [NADPH--hemoprotein reductase] + O2 = 1-[8-hydroxy-(9Z)-octadecenoyl]-sn-glycero-3-phosphocholine + oxidized [NADPH--hemoprotein reductase] + H2O + H(+). The catalysed reaction is 1-(9Z-octadecenoyl)-sn-glycero-3-phosphocholine + reduced [NADPH--hemoprotein reductase] + O2 = 1-[11-hydroxy-(9Z)-octadecenoyl]-sn-glycero-3-phosphocholine + oxidized [NADPH--hemoprotein reductase] + H2O + H(+). The enzyme catalyses 1-(9Z-octadecenoyl)-sn-glycero-3-phosphocholine + reduced [NADPH--hemoprotein reductase] + O2 = 1-[(9S,10R)-epoxy-octadecanoyl]-sn-glycero-3-phosphocholine + oxidized [NADPH--hemoprotein reductase] + H2O + H(+). It catalyses the reaction 1-(9Z-octadecenoyl)-sn-glycero-3-phosphocholine + reduced [NADPH--hemoprotein reductase] + O2 = 1-[(9R,10S)-epoxy-octadecanoyl]-sn-glycero-3-phosphocholine + oxidized [NADPH--hemoprotein reductase] + H2O + H(+). A cytochrome P450 monooxygenase that may play a role in retinoid and phospholipid metabolism. Catalyzes the hydroxylation of saturated carbon hydrogen bonds. Hydroxylates all trans-retinoic acid (atRA) to 4-hydroxyretinoate and may regulate atRA clearance. Other retinoids such as all-trans retinol and all-trans retinal are potential endogenous substrates. Catalyzes both epoxidation of double bonds and hydroxylation of carbon hydrogen bonds of the fatty acyl chain of 1-acylphospholipids/2-lysophospholipids. Can metabolize various lysophospholipids classes including lysophosphatidylcholines (LPCs), lysophosphatidylinositols (LPIs), lysophosphatidylserines (LPSs), lysophosphatidylglycerols (LPGs), lysophosphatidylethanolamines (LPEs) and lysophosphatidic acids (LPAs). Has low or no activity toward 2-acylphospholipids/1-lysophospholipids, diacylphospholipids and free fatty acids. May play a role in tumorigenesis by activating procarcinogens such as aflatoxin B1, polycyclic aromatic hydrocarbon dihydrodiols and aromatic amines. Mechanistically, uses molecular oxygen inserting one oxygen atom into a substrate, and reducing the second into a water molecule, with two electrons provided by NADPH via cytochrome P450 reductase (CPR; NADPH-ferrihemoprotein reductase). This chain is Cytochrome P450 2W1, found in Homo sapiens (Human).